Reading from the N-terminus, the 269-residue chain is 5'-nucleotidase SurE (269 aa).

4 residues coordinate a divalent metal cation: Asp-11, Asp-12, Ser-43, and Asn-101.

This sequence belongs to the SurE nucleotidase family. A divalent metal cation is required as a cofactor.

It localises to the cytoplasm. It carries out the reaction a ribonucleoside 5'-phosphate + H2O = a ribonucleoside + phosphate. In terms of biological role, nucleotidase that shows phosphatase activity on nucleoside 5'-monophosphates. In Synechococcus sp. (strain CC9605), this protein is 5'-nucleotidase SurE.